The primary structure comprises 697 residues: Elongation factor G (697 aa).

A tr-type G domain is found at 10–290; that stretch reads THFRNIGIAA…AVVDYLPSPL (281 aa). GTP contacts are provided by residues 19 to 26, 89 to 93, and 143 to 146; these read AHIDAGKT, DTPGH, and NKMD.

This sequence belongs to the TRAFAC class translation factor GTPase superfamily. Classic translation factor GTPase family. EF-G/EF-2 subfamily.

It is found in the cytoplasm. Functionally, catalyzes the GTP-dependent ribosomal translocation step during translation elongation. During this step, the ribosome changes from the pre-translocational (PRE) to the post-translocational (POST) state as the newly formed A-site-bound peptidyl-tRNA and P-site-bound deacylated tRNA move to the P and E sites, respectively. Catalyzes the coordinated movement of the two tRNA molecules, the mRNA and conformational changes in the ribosome. This Deinococcus deserti (strain DSM 17065 / CIP 109153 / LMG 22923 / VCD115) protein is Elongation factor G.